An 897-amino-acid chain; its full sequence is Coiled-coil domain-containing protein lobo (897 aa).

The interval 27–49 is disordered; the sequence is EIDEQRRSQGSESDFADEMEGEF. A compositionally biased stretch (acidic residues) spans 40 to 49; that stretch reads DFADEMEGEF. 2 coiled-coil regions span residues 269–306 and 801–858; these read DLKS…DLEL and SLLN…QRLT.

It belongs to the DRC7 family. As to expression, testis-specific (at protein level).

It localises to the cell projection. Its subcellular location is the cilium. It is found in the flagellum. The protein resides in the cytoplasm. The protein localises to the cytoskeleton. It localises to the cilium axoneme. Key component of the nexin-dynein regulatory complex (N-DRC), essential for N-DRC integrity. Involved in the regulation of flagellar motility. Involved in sperm motility. Required for the sperm to enter in the coiled storage seminal receptacle (SR) tubule. The sequence is that of Coiled-coil domain-containing protein lobo (lobo) from Drosophila melanogaster (Fruit fly).